We begin with the raw amino-acid sequence, 215 residues long: Phosphatidylserine decarboxylase proenzyme (215 aa).

The active-site Schiff-base intermediate with substrate; via pyruvic acid is the Ser185. Residue Ser185 is modified to Pyruvic acid (Ser); by autocatalysis.

The protein belongs to the phosphatidylserine decarboxylase family. PSD-A subfamily. In terms of assembly, heterodimer of a large membrane-associated beta subunit and a small pyruvoyl-containing alpha subunit. The cofactor is pyruvate. Post-translationally, is synthesized initially as an inactive proenzyme. Formation of the active enzyme involves a self-maturation process in which the active site pyruvoyl group is generated from an internal serine residue via an autocatalytic post-translational modification. Two non-identical subunits are generated from the proenzyme in this reaction, and the pyruvate is formed at the N-terminus of the alpha chain, which is derived from the carboxyl end of the proenzyme. The post-translation cleavage follows an unusual pathway, termed non-hydrolytic serinolysis, in which the side chain hydroxyl group of the serine supplies its oxygen atom to form the C-terminus of the beta chain, while the remainder of the serine residue undergoes an oxidative deamination to produce ammonia and the pyruvoyl prosthetic group on the alpha chain.

It localises to the cell membrane. It catalyses the reaction a 1,2-diacyl-sn-glycero-3-phospho-L-serine + H(+) = a 1,2-diacyl-sn-glycero-3-phosphoethanolamine + CO2. The protein operates within phospholipid metabolism; phosphatidylethanolamine biosynthesis; phosphatidylethanolamine from CDP-diacylglycerol: step 2/2. Functionally, catalyzes the formation of phosphatidylethanolamine (PtdEtn) from phosphatidylserine (PtdSer). The chain is Phosphatidylserine decarboxylase proenzyme from Streptomyces avermitilis (strain ATCC 31267 / DSM 46492 / JCM 5070 / NBRC 14893 / NCIMB 12804 / NRRL 8165 / MA-4680).